Consider the following 83-residue polypeptide: Scyreptin (83 aa).

Cationic antimicrobial peptide that exhibits a potent and broad-spectrum antimicrobial activity against both bacteria and fungi, as well as against the multidrug-resistant bacteria P.aeruginosa. Exhibits rapid bactericidal kinetic. Acts by destroying the integrity of bacterial membranes, leading to bacterial death. Also exhibits potent anti-biofilm activity against P.aeruginosa. Shows high thermal stability and ion tolerance, as it maintains antibacterial activity even when heated to 100 degrees Celsius for 30 minutes and in presence of high levels of NaCl, CaCl(2) and MgCl(2). Does not show cytotoxicity and hemolytic activity. In a mouse model of burn infection, exhibits a remarkably reduction in the bacterial load caused by multidrug-resistant P.aeruginosa at the site of infection, and promotes wound healing. The sequence is that of Scyreptin from Scylla paramamosain (Mud crab).